A 348-amino-acid polypeptide reads, in one-letter code: Dihydroorotase (348 aa).

Zn(2+) contacts are provided by His17 and His19. Residues 19 to 21 (HLR) and Asn45 each bind substrate. 3 residues coordinate Zn(2+): Lys103, His140, and His178. N6-carboxylysine is present on Lys103. Residue His140 coordinates substrate. Residue Leu223 coordinates substrate. Asp251 is a binding site for Zn(2+). The active site involves Asp251. 2 residues coordinate substrate: His255 and Ala267.

Belongs to the metallo-dependent hydrolases superfamily. DHOase family. Class II DHOase subfamily. In terms of assembly, homodimer. Zn(2+) is required as a cofactor.

The enzyme catalyses (S)-dihydroorotate + H2O = N-carbamoyl-L-aspartate + H(+). It participates in pyrimidine metabolism; UMP biosynthesis via de novo pathway; (S)-dihydroorotate from bicarbonate: step 3/3. Functionally, catalyzes the reversible cyclization of carbamoyl aspartate to dihydroorotate. The chain is Dihydroorotase from Edwardsiella ictaluri (strain 93-146).